The chain runs to 105 residues: Small ribosomal subunit protein eS25 (105 aa).

The protein belongs to the eukaryotic ribosomal protein eS25 family. As to quaternary structure, component of the small ribosomal subunit. Mature ribosomes consist of a small (40S) and a large (60S) subunit. The 40S subunit contains about 32 different proteins and 1 molecule of RNA (18S). The 60S subunit contains 45 different proteins and 3 molecules of RNA (25S, 5.8S and 5S).

It localises to the cytoplasm. Functionally, component of the ribosome, a large ribonucleoprotein complex responsible for the synthesis of proteins in the cell. The small ribosomal subunit (SSU) binds messenger RNAs (mRNAs) and translates the encoded message by selecting cognate aminoacyl-transfer RNA (tRNA) molecules. The large subunit (LSU) contains the ribosomal catalytic site termed the peptidyl transferase center (PTC), which catalyzes the formation of peptide bonds, thereby polymerizing the amino acids delivered by tRNAs into a polypeptide chain. The nascent polypeptides leave the ribosome through a tunnel in the LSU and interact with protein factors that function in enzymatic processing, targeting, and the membrane insertion of nascent chains at the exit of the ribosomal tunnel. This chain is Small ribosomal subunit protein eS25 (RPS25B), found in Candida albicans (strain SC5314 / ATCC MYA-2876) (Yeast).